Here is an 857-residue protein sequence, read N- to C-terminus: Envelope glycoprotein B (857 aa).

Positions 1-21 (MTRRRVLSVVVLLAALACRLG) are cleaved as a signal peptide. Residues 22–732 (AQTPEQPAPP…SGFISFFKNP (711 aa)) lie on the Virion surface side of the membrane. Cystine bridges form between Cys-51–Cys-528, Cys-68–Cys-484, Cys-141–Cys-206, Cys-295–Cys-342, and Cys-551–Cys-588. Asn-76 carries N-linked (GlcNAc...) asparagine; by host glycosylation. The involved in fusion and/or binding to host membrane stretch occupies residues 108–114 (IYNGWYA). Asn-163 carries N-linked (GlcNAc...) asparagine; by host glycosylation. An involved in fusion and/or binding to host membrane region spans residues 192-200 (GWLIWTYRT). 4 N-linked (GlcNAc...) asparagine; by host glycosylation sites follow: Asn-290, Asn-329, Asn-348, and Asn-395. A disordered region spans residues 398–453 (ELTTPTSSPPSSPSPPAPSAARGSTPAAVLRRRRRDAGNATTPVPPTAPGKSLGTL). The segment covering 404–415 (SSPPSSPSPPAP) has biased composition (pro residues). A compositionally biased stretch (low complexity) spans 416-425 (SAARGSTPAA). 3 N-linked (GlcNAc...) asparagine; by host glycosylation sites follow: Asn-436, Asn-563, and Asn-629. The interval 561 to 620 (FINDTKTYEGQLGTDNEIFLTKKMTEVCQATSQYYFQSGNEIHVYNDYHHFKTIELDGIA) is oligomerization. Hydrophobic membrane proximal region stretches follow at residues 678 to 730 (LDNA…SFFK) and 709 to 729 (NLVSTVGGLFSSLVSGFISFF). Residues 733 to 753 (FGGMLILVLVAGVVILVISLT) form a helical membrane-spanning segment. The Intravirion portion of the chain corresponds to 754 to 857 (RRTRQMSQQP…ALLGEAETEF (104 aa)). Residues 832 to 857 (FPGLRRRRYHDPETAAALLGEAETEF) are disordered. The segment covering 845–857 (TAAALLGEAETEF) has biased composition (low complexity).

This sequence belongs to the herpesviridae glycoprotein B family. Homotrimer; disulfide-linked. Binds to heparan sulfate proteoglycans. Interacts with gH/gL heterodimer. In terms of processing, a proteolytic cleavage by host furin generates two subunits that remain linked by disulfide bonds.

Its subcellular location is the virion membrane. The protein resides in the host cell membrane. It is found in the host endosome membrane. The protein localises to the host Golgi apparatus membrane. Its function is as follows. Envelope glycoprotein that forms spikes at the surface of virion envelope. Essential for the initial attachment to heparan sulfate moieties of the host cell surface proteoglycans. Involved in fusion of viral and cellular membranes leading to virus entry into the host cell. Following initial binding to its host receptors, membrane fusion is mediated by the fusion machinery composed at least of gB and the heterodimer gH/gL. May be involved in the fusion between the virion envelope and the outer nuclear membrane during virion egress. The polypeptide is Envelope glycoprotein B (Epstein-Barr virus (strain B95-8) (HHV-4)).